We begin with the raw amino-acid sequence, 283 residues long: Putative casein kinase II subunit beta-4 (283 aa).

2 disordered regions span residues 1–23 (MYKD…EILG) and 35–92 (LDKH…SEGD). The segment covering 7–16 (GGGIMGGGGS) has biased composition (gly residues). Residues 58–70 (VPSTSTAKSQLHS) are compositionally biased toward polar residues.

The protein belongs to the casein kinase 2 subunit beta family. Heterotetramer of two catalytic alpha subunits and two regulatory beta subunits. In terms of processing, phosphorylated by alpha subunit.

The protein localises to the cytoplasm. Its subcellular location is the cytosol. Plays a complex role in regulating the basal catalytic activity of the alpha subunit. The tetrameric holoenzyme CK2, composed of two alpha and two beta subunits, phosphorylates the transcription factor PIF1 after an exposure to light, resulting in a proteasome-dependent degradation of PIF1 and promotion of photomorphogenesis. CK2 phosphorylates translation initiation factors. May participate in the regulation of the initiation of translation. The polypeptide is Putative casein kinase II subunit beta-4 (Arabidopsis thaliana (Mouse-ear cress)).